A 472-amino-acid chain; its full sequence is Uronate isomerase (472 aa).

It belongs to the metallo-dependent hydrolases superfamily. Uronate isomerase family.

It catalyses the reaction D-glucuronate = D-fructuronate. The enzyme catalyses aldehydo-D-galacturonate = keto-D-tagaturonate. It functions in the pathway carbohydrate metabolism; pentose and glucuronate interconversion. The sequence is that of Uronate isomerase from Halalkalibacterium halodurans (strain ATCC BAA-125 / DSM 18197 / FERM 7344 / JCM 9153 / C-125) (Bacillus halodurans).